The chain runs to 416 residues: Peptide chain release factor subunit 1 (416 aa).

Belongs to the eukaryotic release factor 1 family. Heterodimer of two subunits, one of which binds GTP.

It is found in the cytoplasm. In terms of biological role, directs the termination of nascent peptide synthesis (translation) in response to the termination codons UAA, UAG and UGA. This is Peptide chain release factor subunit 1 from Haloquadratum walsbyi (strain DSM 16790 / HBSQ001).